The chain runs to 255 residues: Imidazole glycerol phosphate synthase subunit HisF (255 aa).

Catalysis depends on residues D11 and D130.

Belongs to the HisA/HisF family. Heterodimer of HisH and HisF.

The protein resides in the cytoplasm. The enzyme catalyses 5-[(5-phospho-1-deoxy-D-ribulos-1-ylimino)methylamino]-1-(5-phospho-beta-D-ribosyl)imidazole-4-carboxamide + L-glutamine = D-erythro-1-(imidazol-4-yl)glycerol 3-phosphate + 5-amino-1-(5-phospho-beta-D-ribosyl)imidazole-4-carboxamide + L-glutamate + H(+). Its pathway is amino-acid biosynthesis; L-histidine biosynthesis; L-histidine from 5-phospho-alpha-D-ribose 1-diphosphate: step 5/9. Functionally, IGPS catalyzes the conversion of PRFAR and glutamine to IGP, AICAR and glutamate. The HisF subunit catalyzes the cyclization activity that produces IGP and AICAR from PRFAR using the ammonia provided by the HisH subunit. The polypeptide is Imidazole glycerol phosphate synthase subunit HisF (Rhodopseudomonas palustris (strain HaA2)).